The primary structure comprises 463 residues: Glutamate--tRNA ligase (463 aa).

Residues P10–G20 carry the 'HIGH' region motif. A 'KMSKS' region motif is present at residues K236 to R240. K239 lines the ATP pocket.

Belongs to the class-I aminoacyl-tRNA synthetase family. Glutamate--tRNA ligase type 1 subfamily. As to quaternary structure, monomer.

The protein resides in the cytoplasm. It carries out the reaction tRNA(Glu) + L-glutamate + ATP = L-glutamyl-tRNA(Glu) + AMP + diphosphate. Catalyzes the attachment of glutamate to tRNA(Glu) in a two-step reaction: glutamate is first activated by ATP to form Glu-AMP and then transferred to the acceptor end of tRNA(Glu). In Nitratidesulfovibrio vulgaris (strain DP4) (Desulfovibrio vulgaris), this protein is Glutamate--tRNA ligase.